The chain runs to 217 residues: Probable transaldolase (217 aa).

The active-site Schiff-base intermediate with substrate is the Lys-83.

Belongs to the transaldolase family. Type 3B subfamily.

Its subcellular location is the cytoplasm. The catalysed reaction is D-sedoheptulose 7-phosphate + D-glyceraldehyde 3-phosphate = D-erythrose 4-phosphate + beta-D-fructose 6-phosphate. The protein operates within carbohydrate degradation; pentose phosphate pathway; D-glyceraldehyde 3-phosphate and beta-D-fructose 6-phosphate from D-ribose 5-phosphate and D-xylulose 5-phosphate (non-oxidative stage): step 2/3. Functionally, transaldolase is important for the balance of metabolites in the pentose-phosphate pathway. This chain is Probable transaldolase, found in Caulobacter vibrioides (strain NA1000 / CB15N) (Caulobacter crescentus).